The sequence spans 375 residues: Homoserine O-succinyltransferase (375 aa).

The region spanning Asn48 to Asp358 is the AB hydrolase-1 domain. The active-site Nucleophile is Ser154. Arg224 is a binding site for substrate. Residues Asp319 and His352 contribute to the active site. Substrate is bound at residue Asp353.

This sequence belongs to the AB hydrolase superfamily. MetX family. As to quaternary structure, homodimer.

It localises to the cytoplasm. It catalyses the reaction L-homoserine + succinyl-CoA = O-succinyl-L-homoserine + CoA. The protein operates within amino-acid biosynthesis; L-methionine biosynthesis via de novo pathway; O-succinyl-L-homoserine from L-homoserine: step 1/1. In terms of biological role, transfers a succinyl group from succinyl-CoA to L-homoserine, forming succinyl-L-homoserine. The sequence is that of Homoserine O-succinyltransferase from Azoarcus sp. (strain BH72).